Reading from the N-terminus, the 385-residue chain is Single-stranded DNA-binding protein 4 (385 aa).

An N-acetylmethionine modification is found at Met1. The 33-residue stretch at 17-49 folds into the LisH domain; the sequence is AREKLALYVYEYLLHIGAQKSAQTFLSEIRWEK. Disordered regions lie at residues 122-287 and 331-363; these read FQGP…NSSE and GSGD…GEMA. Residues 245–263 show a composition bias toward low complexity; that stretch reads SPSGNSIPYSSSSPGSYTG. The span at 267 to 277 shows a compositional bias: pro residues; that stretch reads GGGPPGTPIMP. Ser341 carries the phosphoserine modification. The residue at position 355 (Thr355) is a Phosphothreonine.

It localises to the nucleus. This is Single-stranded DNA-binding protein 4 (SSBP4) from Homo sapiens (Human).